The sequence spans 483 residues: Aspartyl/glutamyl-tRNA(Asn/Gln) amidotransferase subunit B (483 aa).

It belongs to the GatB/GatE family. GatB subfamily. Heterotrimer of A, B and C subunits.

It carries out the reaction L-glutamyl-tRNA(Gln) + L-glutamine + ATP + H2O = L-glutaminyl-tRNA(Gln) + L-glutamate + ADP + phosphate + H(+). The enzyme catalyses L-aspartyl-tRNA(Asn) + L-glutamine + ATP + H2O = L-asparaginyl-tRNA(Asn) + L-glutamate + ADP + phosphate + 2 H(+). Functionally, allows the formation of correctly charged Asn-tRNA(Asn) or Gln-tRNA(Gln) through the transamidation of misacylated Asp-tRNA(Asn) or Glu-tRNA(Gln) in organisms which lack either or both of asparaginyl-tRNA or glutaminyl-tRNA synthetases. The reaction takes place in the presence of glutamine and ATP through an activated phospho-Asp-tRNA(Asn) or phospho-Glu-tRNA(Gln). The polypeptide is Aspartyl/glutamyl-tRNA(Asn/Gln) amidotransferase subunit B (Anaplasma phagocytophilum (strain HZ)).